We begin with the raw amino-acid sequence, 200 residues long: Superoxide dismutase [Mn] 1 (200 aa).

Residues His-29, His-76, Asp-158, and His-162 each contribute to the Mn(2+) site.

It belongs to the iron/manganese superoxide dismutase family. It depends on Mn(2+) as a cofactor.

It catalyses the reaction 2 superoxide + 2 H(+) = H2O2 + O2. Functionally, destroys superoxide anion radicals which are normally produced within the cells and which are toxic to biological systems. The sequence is that of Superoxide dismutase [Mn] 1 (sod1) from Haloferax volcanii (strain ATCC 29605 / DSM 3757 / JCM 8879 / NBRC 14742 / NCIMB 2012 / VKM B-1768 / DS2) (Halobacterium volcanii).